A 462-amino-acid polypeptide reads, in one-letter code: Cytochrome P450 20A1 (462 aa).

Residues 4–24 form a helical membrane-spanning segment; sequence FAIFAVTFLLALVGAVLYLYP. Position 409 (Cys-409) interacts with heme.

Belongs to the cytochrome P450 family. The cofactor is heme.

Its subcellular location is the membrane. This is Cytochrome P450 20A1 (Cyp20a1) from Mus musculus (Mouse).